Reading from the N-terminus, the 351-residue chain is Homoserine O-acetyltransferase (351 aa).

Positions valine 51–glutamate 334 constitute an AB hydrolase-1 domain. The Nucleophile role is filled by serine 146. Arginine 212 provides a ligand contact to substrate. Active-site residues include aspartate 299 and histidine 328. Aspartate 329 is a substrate binding site.

It belongs to the AB hydrolase superfamily. MetX family. In terms of assembly, homodimer.

The protein resides in the cytoplasm. The enzyme catalyses L-homoserine + acetyl-CoA = O-acetyl-L-homoserine + CoA. It participates in amino-acid biosynthesis; L-methionine biosynthesis via de novo pathway; O-acetyl-L-homoserine from L-homoserine: step 1/1. Transfers an acetyl group from acetyl-CoA to L-homoserine, forming acetyl-L-homoserine. This is Homoserine O-acetyltransferase from Cyclobacterium marinum (strain ATCC 25205 / DSM 745 / LMG 13164 / NCIMB 1802) (Flectobacillus marinus).